A 231-amino-acid polypeptide reads, in one-letter code: Phosphatidylserine decarboxylase proenzyme (231 aa).

Serine 188 functions as the Schiff-base intermediate with substrate; via pyruvic acid in the catalytic mechanism. The residue at position 188 (serine 188) is a Pyruvic acid (Ser); by autocatalysis.

Belongs to the phosphatidylserine decarboxylase family. PSD-A subfamily. As to quaternary structure, heterodimer of a large membrane-associated beta subunit and a small pyruvoyl-containing alpha subunit. Requires pyruvate as cofactor. In terms of processing, is synthesized initially as an inactive proenzyme. Formation of the active enzyme involves a self-maturation process in which the active site pyruvoyl group is generated from an internal serine residue via an autocatalytic post-translational modification. Two non-identical subunits are generated from the proenzyme in this reaction, and the pyruvate is formed at the N-terminus of the alpha chain, which is derived from the carboxyl end of the proenzyme. The post-translation cleavage follows an unusual pathway, termed non-hydrolytic serinolysis, in which the side chain hydroxyl group of the serine supplies its oxygen atom to form the C-terminus of the beta chain, while the remainder of the serine residue undergoes an oxidative deamination to produce ammonia and the pyruvoyl prosthetic group on the alpha chain.

It is found in the cell membrane. It catalyses the reaction a 1,2-diacyl-sn-glycero-3-phospho-L-serine + H(+) = a 1,2-diacyl-sn-glycero-3-phosphoethanolamine + CO2. Its pathway is phospholipid metabolism; phosphatidylethanolamine biosynthesis; phosphatidylethanolamine from CDP-diacylglycerol: step 2/2. Its function is as follows. Catalyzes the formation of phosphatidylethanolamine (PtdEtn) from phosphatidylserine (PtdSer). The sequence is that of Phosphatidylserine decarboxylase proenzyme from Rickettsia felis (strain ATCC VR-1525 / URRWXCal2) (Rickettsia azadi).